The sequence spans 448 residues: Homogentisate 1,2-dioxygenase (448 aa).

H303 functions as the Proton acceptor in the catalytic mechanism. Positions 346 and 352 each coordinate Fe cation. Residues Y361 and H382 each coordinate homogentisate. H382 contacts Fe cation.

It belongs to the homogentisate dioxygenase family. Hexamer; dimer of trimers. It depends on Fe cation as a cofactor.

It carries out the reaction homogentisate + O2 = 4-maleylacetoacetate + H(+). It functions in the pathway amino-acid degradation; L-phenylalanine degradation; acetoacetate and fumarate from L-phenylalanine: step 4/6. Its function is as follows. Involved in the catabolism of homogentisate (2,5-dihydroxyphenylacetate or 2,5-OH-PhAc), a central intermediate in the degradation of phenylalanine and tyrosine. Catalyzes the oxidative ring cleavage of the aromatic ring of homogentisate to yield maleylacetoacetate. The polypeptide is Homogentisate 1,2-dioxygenase (Nitrobacter hamburgensis (strain DSM 10229 / NCIMB 13809 / X14)).